The primary structure comprises 478 residues: Aspartyl/glutamyl-tRNA(Asn/Gln) amidotransferase subunit B (478 aa).

This sequence belongs to the GatB/GatE family. GatB subfamily. Heterotrimer of A, B and C subunits.

The enzyme catalyses L-glutamyl-tRNA(Gln) + L-glutamine + ATP + H2O = L-glutaminyl-tRNA(Gln) + L-glutamate + ADP + phosphate + H(+). The catalysed reaction is L-aspartyl-tRNA(Asn) + L-glutamine + ATP + H2O = L-asparaginyl-tRNA(Asn) + L-glutamate + ADP + phosphate + 2 H(+). Its function is as follows. Allows the formation of correctly charged Asn-tRNA(Asn) or Gln-tRNA(Gln) through the transamidation of misacylated Asp-tRNA(Asn) or Glu-tRNA(Gln) in organisms which lack either or both of asparaginyl-tRNA or glutaminyl-tRNA synthetases. The reaction takes place in the presence of glutamine and ATP through an activated phospho-Asp-tRNA(Asn) or phospho-Glu-tRNA(Gln). This Dichelobacter nodosus (strain VCS1703A) protein is Aspartyl/glutamyl-tRNA(Asn/Gln) amidotransferase subunit B.